Consider the following 374-residue polypeptide: Glutamate 5-kinase (374 aa).

K9 serves as a coordination point for ATP. 3 residues coordinate substrate: S49, D136, and N148. Residues 168–169 (TD) and 210–216 (TGGMRSK) each bind ATP. A PUA domain is found at 276–354 (AGMITVDSGA…EEARQYSYLH (79 aa)).

Belongs to the glutamate 5-kinase family.

It is found in the cytoplasm. The catalysed reaction is L-glutamate + ATP = L-glutamyl 5-phosphate + ADP. The protein operates within amino-acid biosynthesis; L-proline biosynthesis; L-glutamate 5-semialdehyde from L-glutamate: step 1/2. In terms of biological role, catalyzes the transfer of a phosphate group to glutamate to form L-glutamate 5-phosphate. The chain is Glutamate 5-kinase from Geobacillus kaustophilus (strain HTA426).